Reading from the N-terminus, the 336-residue chain is tRNA-modifying protein YgfZ (336 aa).

The folate site is built by Trp-28 and Trp-191.

The protein belongs to the tRNA-modifying YgfZ family.

The protein localises to the cytoplasm. Its function is as follows. Folate-binding protein involved in regulating the level of ATP-DnaA and in the modification of some tRNAs. It is probably a key factor in regulatory networks that act via tRNA modification, such as initiation of chromosomal replication. The polypeptide is tRNA-modifying protein YgfZ (Hamiltonella defensa subsp. Acyrthosiphon pisum (strain 5AT)).